We begin with the raw amino-acid sequence, 352 residues long: Small ribosomal subunit biogenesis GTPase RsgA (352 aa).

Residues 1-15 (MTKRKLTQNQKRRIH) show a composition bias toward basic residues. The disordered stretch occupies residues 1–26 (MTKRKLTQNQKRRIHSNNVKALDRHH). Positions 106–274 (ENEIARPDYY…LIDSPGIREF (169 aa)) constitute a CP-type G domain. GTP-binding positions include 162 to 165 (NKVD) and 216 to 224 (GQSGVGKSS). Positions 298, 303, 305, and 311 each coordinate Zn(2+).

It belongs to the TRAFAC class YlqF/YawG GTPase family. RsgA subfamily. As to quaternary structure, monomer. Associates with 30S ribosomal subunit, binds 16S rRNA. Zn(2+) serves as cofactor.

It is found in the cytoplasm. In terms of biological role, one of several proteins that assist in the late maturation steps of the functional core of the 30S ribosomal subunit. Helps release RbfA from mature subunits. May play a role in the assembly of ribosomal proteins into the subunit. Circularly permuted GTPase that catalyzes slow GTP hydrolysis, GTPase activity is stimulated by the 30S ribosomal subunit. In Mannheimia succiniciproducens (strain KCTC 0769BP / MBEL55E), this protein is Small ribosomal subunit biogenesis GTPase RsgA.